Consider the following 125-residue polypeptide: Large ribosomal subunit protein bL17 (125 aa).

It belongs to the bacterial ribosomal protein bL17 family. Part of the 50S ribosomal subunit. Contacts protein L32.

The protein is Large ribosomal subunit protein bL17 of Marinomonas sp. (strain MWYL1).